Consider the following 604-residue polypeptide: MKQLKLTGFVIFFFFLTESLTLPTQPQDVDDVRITQKFIDDNIGYITIIAFAQYIQEASFEEVEMLVKAMTEYRDKCLADRTLPECSKLANEVLLENICAMEGLPQKYNFSHCCHKVDFERRLCFFHNKKADIGLLPPLPTLDPEEKCQTYKNNRESFLNNYVYEVSRRNPFVFAPTLLTVAARFEEMTKTCCEEQEKANCFQTKAEPFIYYLKALSSYQKNACRALMKFGRQILQSINIAILSQKFPKIGFKQLTSLLEDVSSKYDGCCEGDVVQCIRGRSKVMSHICSKQDSISSKIKDCCEKKIPERGECIIYSNKDDRPNDLSLREAKFIESDNVCEKRDADQANFMAEFLYEYSRRHPELSTPELLRIAKVYKDLLKECCNMENPPECYRHAENRFNETTEKSLKIVQRECEHFQNLGKDDLKYHYLINLTKLAPQLSTEELTFLGKEMVMALTTCCTLSEEFACVDNLVDLVLGELCGINENRNINPAVDHCCKTNFAFRRSCFESLEADKTYVPPSTSQGLFTFHADLCQAHNEELQRKKDRFLVNLVKLKPELAGEELWSLLADFTNVVEKCCKAQEPEACFKEESPKLAAKSQAA.

The signal sequence occupies residues 1 to 21 (MKQLKLTGFVIFFFFLTESLT). Albumin domains are found at residues 22–210 (LPTQ…EPFI), 211–403 (YYLK…RFNE), and 404–598 (TTEK…PKLA). Intrachain disulfides connect C77-C86, C99-C114, C113-C124, C148-C193, C192-C201, C224-C270, C269-C277, C289-C303, C302-C313, C340-C385, C384-C393, C416-C462, C461-C470, C483-C499, C498-C509, C536-C581, and C580-C589. N-linked (GlcNAc...) asparagine glycosylation occurs at N109. The binding pocket for hydrophobic ligands stretch occupies residues 215–319 (ALSSYQKNAC…RGECIIYSNK (105 aa)). A glycan (N-linked (GlcNAc...) asparagine) is linked at N434.

The protein belongs to the ALB/AFP/VDB family. As to quaternary structure, forms a 1:1 complex with Wnt family members; interacts with WNT3A and WNT5A. Interacts with WNT1, WNT2B, WNT3, WNT7A, WNT7B, WNT8, WNT9A, WNT9B, WNT10A and WNT10B. N-glycosylated; more than 90% of the glycans are sialylated.

It is found in the secreted. In terms of biological role, functions as a carrier for hydrophobic molecules in body fluids. Essential for the solubility and activity of lipidated Wnt family members, including WNT1, WNT2B, WNT3, WNT3A, WNT5A, WNT7A, WNT7B, WNT8, WNT9A, WNT9B, WNT10A and WNT10B. Binds vitamin E. May transport vitamin E in body fluids under conditions where the lipoprotein system is not sufficient. May be involved in the transport of vitamin E across the blood-brain barrier. This Bos taurus (Bovine) protein is Afamin (AFM).